We begin with the raw amino-acid sequence, 379 residues long: Probable RNA 3'-terminal phosphate cyclase-like protein (379 aa).

The protein belongs to the RNA 3'-terminal cyclase family. Type 2 subfamily. Part of the small subunit (SSU) processome, composed of more than 70 proteins and the RNA chaperone small nucleolar RNA (snoRNA) U3.

It localises to the nucleus. It is found in the nucleolus. Part of the small subunit (SSU) processome, first precursor of the small eukaryotic ribosomal subunit. During the assembly of the SSU processome in the nucleolus, many ribosome biogenesis factors, an RNA chaperone and ribosomal proteins associate with the nascent pre-rRNA and work in concert to generate RNA folding, modifications, rearrangements and cleavage as well as targeted degradation of pre-ribosomal RNA by the RNA exosome. Does not have cyclase activity. The chain is Probable RNA 3'-terminal phosphate cyclase-like protein from Caenorhabditis elegans.